A 192-amino-acid chain; its full sequence is Imidazole glycerol phosphate synthase subunit HisH (192 aa).

The region spanning 1–192 (MIAIIDYGLG…QALKGGFIND (192 aa)) is the Glutamine amidotransferase type-1 domain. Cys-77 acts as the Nucleophile in catalysis. Catalysis depends on residues His-169 and Glu-171.

Heterodimer of HisH and HisF.

It is found in the cytoplasm. The catalysed reaction is 5-[(5-phospho-1-deoxy-D-ribulos-1-ylimino)methylamino]-1-(5-phospho-beta-D-ribosyl)imidazole-4-carboxamide + L-glutamine = D-erythro-1-(imidazol-4-yl)glycerol 3-phosphate + 5-amino-1-(5-phospho-beta-D-ribosyl)imidazole-4-carboxamide + L-glutamate + H(+). It catalyses the reaction L-glutamine + H2O = L-glutamate + NH4(+). Its pathway is amino-acid biosynthesis; L-histidine biosynthesis; L-histidine from 5-phospho-alpha-D-ribose 1-diphosphate: step 5/9. In terms of biological role, IGPS catalyzes the conversion of PRFAR and glutamine to IGP, AICAR and glutamate. The HisH subunit catalyzes the hydrolysis of glutamine to glutamate and ammonia as part of the synthesis of IGP and AICAR. The resulting ammonia molecule is channeled to the active site of HisF. The polypeptide is Imidazole glycerol phosphate synthase subunit HisH (Staphylococcus epidermidis (strain ATCC 35984 / DSM 28319 / BCRC 17069 / CCUG 31568 / BM 3577 / RP62A)).